A 287-amino-acid polypeptide reads, in one-letter code: Ret finger protein-like 4A-like protein 1 (287 aa).

The segment at 11–53 (CPVCLKDLEEAVQLKCGYACCLQCLNSLQKEPDGEGLLCRFCS) adopts an RING-type; degenerate zinc-finger fold. Residues 78–276 (EPKLKSVLTM…LSICSVINPS (199 aa)) form the B30.2/SPRY domain.

This chain is Ret finger protein-like 4A-like protein 1 (RFPL4AL1), found in Homo sapiens (Human).